The primary structure comprises 267 residues: Tryptophan synthase alpha chain (267 aa).

Residues Glu-49 and Asp-60 each act as proton acceptor in the active site.

The protein belongs to the TrpA family. In terms of assembly, tetramer of two alpha and two beta chains.

The enzyme catalyses (1S,2R)-1-C-(indol-3-yl)glycerol 3-phosphate + L-serine = D-glyceraldehyde 3-phosphate + L-tryptophan + H2O. The protein operates within amino-acid biosynthesis; L-tryptophan biosynthesis; L-tryptophan from chorismate: step 5/5. Its function is as follows. The alpha subunit is responsible for the aldol cleavage of indoleglycerol phosphate to indole and glyceraldehyde 3-phosphate. This Acaryochloris marina (strain MBIC 11017) protein is Tryptophan synthase alpha chain.